A 463-amino-acid chain; its full sequence is MAVTPSLLRLALLLLGAVGRAGPRPQGATVSLSETVQKWREYRHQCQRFLTEAPLLATGLFCNRTFDDYACWPDGPPGSFVNVSCPWYLPWASSVLQGHVYRFCTAEGIWLHKDNSSLPWRDLSECEESKQGERNSPEEQLLSLYIIYTVGYALSFSALVIASAILVSFRHLHCTRNYIHLNLFASFILRALSVFIKDAALKWMYSTAAQQHQWDGLLSYQDSLGCRLVFLLMQYCVAANYYWLLVEGVYLYTLLAFSVFSEQRIFKLYLSIGWGVPLLFVIPWGIVKYLYEDEGCWTRNSNMNYWLIIRLPILFAIGVNFLVFIRVICIVIAKLKANLMCKTDIKCRLAKSTLTLIPLLGTHEVIFAFVMDEHARGTLRFVKLFTELSFTSFQGFMVAVLYCFVNNEVQMEFRKSWERWRLERLNIQRDSSMKPLKCPTSSVSSGATVGSSVYAATCQNSCS.

Positions 1 to 21 (MAVTPSLLRLALLLLGAVGRA) are cleaved as a signal peptide. Topologically, residues 22–139 (GPRPQGATVS…KQGERNSPEE (118 aa)) are extracellular. Cystine bridges form between Cys-46/Cys-71, Cys-62/Cys-104, and Cys-85/Cys-126. N-linked (GlcNAc...) asparagine glycans are attached at residues Asn-63, Asn-82, and Asn-115. A helical transmembrane segment spans residues 140-164 (QLLSLYIIYTVGYALSFSALVIASA). Residues 165–175 (ILVSFRHLHCT) are Cytoplasmic-facing. The chain crosses the membrane as a helical span at residues 176 to 201 (RNYIHLNLFASFILRALSVFIKDAAL). Over 202-227 (KWMYSTAAQQHQWDGLLSYQDSLGCR) the chain is Extracellular. A disulfide bond links Cys-226 and Cys-296. The helical transmembrane segment at 228–251 (LVFLLMQYCVAANYYWLLVEGVYL) threads the bilayer. At 252–265 (YTLLAFSVFSEQRI) the chain is on the cytoplasmic side. The helical transmembrane segment at 266–290 (FKLYLSIGWGVPLLFVIPWGIVKYL) threads the bilayer. Over 291 to 305 (YEDEGCWTRNSNMNY) the chain is Extracellular. Residues 306–328 (WLIIRLPILFAIGVNFLVFIRVI) traverse the membrane as a helical segment. Residues 329-348 (CIVIAKLKANLMCKTDIKCR) lie on the Cytoplasmic side of the membrane. Position 341 is an ADP-ribosylcysteine (Cys-341). ADP-ribosylarginine is present on Arg-348. Residues 349 to 370 (LAKSTLTLIPLLGTHEVIFAFV) form a helical membrane-spanning segment. Residues 352–355 (STLT) are important for allosteric inhibitor binding. The Extracellular portion of the chain corresponds to 371 to 383 (MDEHARGTLRFVK). A helical membrane pass occupies residues 384 to 404 (LFTELSFTSFQGFMVAVLYCF). At 405–463 (VNNEVQMEFRKSWERWRLERLNIQRDSSMKPLKCPTSSVSSGATVGSSVYAATCQNSCS) the chain is on the cytoplasmic side.

Belongs to the G-protein coupled receptor 2 family. In terms of assembly, may form homodimers and heterodimers with GIPR. In terms of processing, N-glycosylation enhances cell surface expression and lengthens receptor half-life by preventing degradation in the ER. Pancreatic islets, stomach, lung, rat insulinoma cell line.

Its subcellular location is the cell membrane. G-protein coupled receptor for glucagon-like peptide 1 (GLP-1). Ligand binding triggers activation of a signaling cascade that leads to the activation of adenylyl cyclase and increased intracellular cAMP levels. Plays a role in regulating insulin secretion in response to GLP-1. The protein is Glucagon-like peptide 1 receptor (Glp1r) of Rattus norvegicus (Rat).